The primary structure comprises 201 residues: 3-isopropylmalate dehydratase small subunit (201 aa).

Belongs to the LeuD family. LeuD type 1 subfamily. In terms of assembly, heterodimer of LeuC and LeuD.

It catalyses the reaction (2R,3S)-3-isopropylmalate = (2S)-2-isopropylmalate. It functions in the pathway amino-acid biosynthesis; L-leucine biosynthesis; L-leucine from 3-methyl-2-oxobutanoate: step 2/4. Catalyzes the isomerization between 2-isopropylmalate and 3-isopropylmalate, via the formation of 2-isopropylmaleate. The polypeptide is 3-isopropylmalate dehydratase small subunit (Shewanella baltica (strain OS155 / ATCC BAA-1091)).